Consider the following 1538-residue polypeptide: MTEQISLVDVSSSVSLKGEDSSNVALLRDLFINDVAASDPAESSADVHKDEHSSDNSDNDNEAVPKPNDFSQRRRIQNAQFEALLSKRTDADSNEAIDRAPIALSDDELSIAHLVEKQDLGNGMLDPREYQIELFERAKTQNTIAVLDTGSGKTLIAVLLLRHTILNELDNRANGKPHRVSFFLVDSVTLAYQQAAVLRNNIDQNVAHFFGAMGTDLWDKRTWDEHLQRNMVIVCTAEILNQCLLNSYVKMDQINLLIFDEAHHAKKDHPYARIIRDSYFKAQPSQRPRVFGMTASPIDTKGDITEAATRLETLLDSRIATTSKITLLREVVSRPIEKVWAYNRLESPFATELYKLMDTRYGNIKVLEGVYRFAWHASSELGKWCSDRAWWHALADDVLPKLEGNISKLVESNTLNAEHGAVFKDIIRIREASETVKNYSFADPELPGELSPKVQLLRMELSKHFSDTTGTKCIVFTQKRYTAKILNELFTVLNIPHLRPGVLIGVRPGDIGGMNVTFRQQFLALVKFRTGEINCLFATSVAEEGLDIPDCNLVVRFDLYRTLIQYVQSRGRARHCTSTYAIMVEKDNAEHEGRLKEIREAEKIMQRFCETLPEDRILHGNDHDLDSLLQEEEGRRTFTVKSTGAKLTYHSAIAILARYASSLQYEKETVPQVTYVVGHVSNAYVCEVILPEKSPIRGLTGSPAIRKAVAKQSAAFDTCLLLRKHRLLDDYFNSIYHRRLPAMRNAKLAITCKRTNEYDMLLKPSIWAKQRTTPIDKLYGIHISLLPSKPLSRDHRPILLLTREKLPEFPAFSIYLDEDVETKVLSYPLKHGLQISVDELQSLTTFTLRIFRDIFHKVYEHEVQKMPYWLAPAKALDGPGSGTNPRDWTDWDTVSFVHNNDEIPFTRDLNPDSLVNRFIFDNWDGRFRYFTVAVADTLQPSDPPPPSVPRRRHMNNIMNYTLSLSKNSRARFFSGCDWNQPVLQAELVRLRRNLLDKMTTQEKEMQTECFICAEPLRISAIPTSIVSTCLAFPAIISRLDSYLIALEACDELELVIRPDFALEAFTKDSDNTEEHRGQQIHFQRGMGKNYERLEFLGDCFLKMATSIALYTQNPDDDEFDYHVNRMCLICNKNLFNTAIKKQIYRYIRSRGFSRHIWYPDGLTLLHGKDHSKKLLSEGKHALGEKTIADVCEALIGASLLSGGPENRFDMATKAVTALVDSPSHRVSCWKEYITLYTMPKYQTEKPRGSEDDLARHVEEELGYHFTYPRLLASAITHPSLPSTWGYRVPCYQRLEFLGDSLLDMVCVEDLFRRFPDRDPQWLTEHKMAMVSNKFLGALSVKLGFHRRIMAFSNPLQAQITHYVEEIESAQAESRGAVDYWVVAKDPPKCLPDMVEAYLGAIFVDSKFDFQVIEVFFERQIKPFFEDMSIYDTFANKHPTTFLHNKLTNEYGCTNYCLKAGELPTIDGAPAGVLAAVIVHGNVISEARSSSSRYAKVKASEKALAVLDGLLPFEFCQKYHCGCKETQNSSSAVEIGTAI.

The interval 39 to 72 (DPAESSADVHKDEHSSDNSDNDNEAVPKPNDFSQ) is disordered. The segment covering 45–55 (ADVHKDEHSSD) has biased composition (basic and acidic residues). Residues 134–315 (LFERAKTQNT…EAATRLETLL (182 aa)) enclose the Helicase ATP-binding domain. 147 to 154 (LDTGSGKT) serves as a coordination point for ATP. Positions 260–263 (DEAH) match the DEAH box motif. The Helicase C-terminal domain maps to 460 to 619 (ELSKHFSDTT…ETLPEDRILH (160 aa)). The 91-residue stretch at 652-742 (AIAILARYAS…NSIYHRRLPA (91 aa)) folds into the Dicer dsRNA-binding fold domain. Residues 892–1020 (DTVSFVHNND…ICAEPLRISA (129 aa)) enclose the PAZ domain. RNase III domains lie at 1044–1203 (IALE…LSGG) and 1254–1406 (ARHV…VDSK). Residues E1295, D1392, and E1395 each coordinate Mg(2+). Residues 1440–1508 (TFLHNKLTNE…SEKALAVLDG (69 aa)) form the DRBM domain. Positions 1452, 1479, 1520, and 1522 each coordinate Zn(2+).

The protein belongs to the helicase family. Dicer subfamily. The cofactor is Mg(2+). Mn(2+) is required as a cofactor.

Functionally, dicer-like endonuclease involved in cleaving double-stranded RNA in the RNA interference (RNAi) pathway. Produces 21 to 25 bp dsRNAs (siRNAs) which target the selective destruction of homologous RNAs leading to sequence-specific suppression of gene expression, called post-transcriptional gene silencing (PTGS). Part of a broad host defense response against viral infection and transposons. This chain is Dicer-like protein 1 (dcl1), found in Neosartorya fischeri (strain ATCC 1020 / DSM 3700 / CBS 544.65 / FGSC A1164 / JCM 1740 / NRRL 181 / WB 181) (Aspergillus fischerianus).